The chain runs to 218 residues: Elongation factor Ts (218 aa).

Residues 82–85 (TDFV) form an involved in Mg(2+) ion dislocation from EF-Tu region.

The protein belongs to the EF-Ts family.

It is found in the cytoplasm. In terms of biological role, associates with the EF-Tu.GDP complex and induces the exchange of GDP to GTP. It remains bound to the aminoacyl-tRNA.EF-Tu.GTP complex up to the GTP hydrolysis stage on the ribosome. In Prochlorococcus marinus (strain NATL2A), this protein is Elongation factor Ts.